The primary structure comprises 577 residues: MALSFFGGGGSASHAKYFDIRLDEDYIVFRGGEQEAASAHLSGKLILCLSEPLSIKHIRLHLTGISRVCWHLPSSSAGGGRKSWRERVFYEKTWRFREPGKGKTEILPAGNYEYPFNIVLEGSMPESVEGLSDTYVTYRFKAEIGRKYAKDIVVRRPLRIIRTLEPSALELSHAMSVENIWPNKIEYSISTPTKAVIFGTSIRVDFKLIPLLKGLKIGQIVSQLIESHDLTLNPEDPDSIRNTYKNTRTIINDEYELDADNALEIIDEAAEGYQFSRFLDLPKTLTRCLQDTDTKGIKIRHKLKFRVQLLNPDGHISELRATLPVSIFISPNLAIDDNNNLVDQTPQTAQRAVDDLAQQAPPLYGEHQFDQLYSELDPAGYRTPGPGSGPGTPFGTLSRNLSAENLASMNALTTTDISASALHSRLSNLHASRHSNPSPSESENQLESRLGVPTDYFGPSSGSNTHSLTSPELSRRPSDEVDHDHVPSGMATPFHPQYAEVETPEPCPKLFHSGPHFSEDVAIPAPQSPQQAHVRSANRSSSYFNPMDLLHHRPGYPGGHGDEEERQLRLMQARARV.

Disordered stretches follow at residues 376-398 (LDPA…GTLS) and 428-566 (NLHA…EEER). 2 stretches are compositionally biased toward polar residues: residues 428–447 (NLHA…NQLE) and 460–472 (SSGS…TSPE). The span at 473–486 (LSRRPSDEVDHDHV) shows a compositional bias: basic and acidic residues. Residues 528 to 544 (SPQQAHVRSANRSSSYF) are compositionally biased toward polar residues.

It belongs to the arrestin family. Interacts with hulA.

Component of the regulatory network controlling carbon source utilization through ubiquitination and deubiquitination involving creA, creB, creC, creD and acrB. May be involved in signaling by recognizing appropriately phosphorylated substrates via its arrestin domains and then recruit a HECT-type ubiquitin ligase such as hulA, leading to ubiquitination of the substrate, providing a link between ubiquitination and phosphorylation in protein regulation and stability. This chain is Probable HECT-type ubiquitin ligase-interacting protein creD (creD), found in Aspergillus terreus (strain NIH 2624 / FGSC A1156).